Reading from the N-terminus, the 413-residue chain is Putative F-box protein At3g58820 (413 aa).

The 48-residue stretch at 1 to 48 (MDGVSSLPNELLCHILSFLTTKEAALTSILSKRWRNLIAFVPNLYIDD) folds into the F-box domain.

The polypeptide is Putative F-box protein At3g58820 (Arabidopsis thaliana (Mouse-ear cress)).